Here is a 364-residue protein sequence, read N- to C-terminus: Fructose-bisphosphate aldolase C (364 aa).

A Phosphotyrosine modification is found at Tyr5. 3 positions are modified to phosphoserine: Ser36, Ser39, and Ser45. Arg56 is a binding site for substrate. Lys111 carries the post-translational modification N6-acetyllysine. At Ser132 the chain carries Phosphoserine. Lys147 provides a ligand contact to substrate. Glu188 (proton acceptor) is an active-site residue. Lys230 serves as the catalytic Schiff-base intermediate with dihydroxyacetone-P.

It belongs to the class I fructose-bisphosphate aldolase family. As to quaternary structure, homotetramer. Interacts with ATP6V1E1.

It catalyses the reaction beta-D-fructose 1,6-bisphosphate = D-glyceraldehyde 3-phosphate + dihydroxyacetone phosphate. The protein operates within carbohydrate degradation; glycolysis; D-glyceraldehyde 3-phosphate and glycerone phosphate from D-glucose: step 4/4. The sequence is that of Fructose-bisphosphate aldolase C (ALDOC) from Macaca fascicularis (Crab-eating macaque).